A 217-amino-acid polypeptide reads, in one-letter code: Probable GTP-binding protein EngB (217 aa).

One can recognise an EngB-type G domain in the interval 27-201; sequence GGVEIAFAGR…AQTLSGWYLA (175 aa). GTP is bound by residues 35 to 42, 62 to 66, 80 to 83, 147 to 150, and 180 to 182; these read GRSNAGKS, GRTQL, DLPG, TKAD, and FSS. The Mg(2+) site is built by Ser-42 and Thr-64.

This sequence belongs to the TRAFAC class TrmE-Era-EngA-EngB-Septin-like GTPase superfamily. EngB GTPase family. The cofactor is Mg(2+).

Necessary for normal cell division and for the maintenance of normal septation. The chain is Probable GTP-binding protein EngB from Aeromonas salmonicida (strain A449).